The sequence spans 548 residues: Membrane protein insertase YidC (548 aa).

The next 5 helical transmembrane spans lie at 6 to 26 (NLIL…WESD), 357 to 377 (NWGV…FPLT), 424 to 444 (LGGC…YWAL), 455 to 475 (FALW…PILM), and 503 to 523 (PIIF…YWLV).

The protein belongs to the OXA1/ALB3/YidC family. Type 1 subfamily. Interacts with the Sec translocase complex via SecD. Specifically interacts with transmembrane segments of nascent integral membrane proteins during membrane integration.

The protein resides in the cell inner membrane. Its function is as follows. Required for the insertion and/or proper folding and/or complex formation of integral membrane proteins into the membrane. Involved in integration of membrane proteins that insert both dependently and independently of the Sec translocase complex, as well as at least some lipoproteins. Aids folding of multispanning membrane proteins. The polypeptide is Membrane protein insertase YidC (Aeromonas hydrophila subsp. hydrophila (strain ATCC 7966 / DSM 30187 / BCRC 13018 / CCUG 14551 / JCM 1027 / KCTC 2358 / NCIMB 9240 / NCTC 8049)).